We begin with the raw amino-acid sequence, 207 residues long: Dephospho-CoA kinase (207 aa).

The DPCK domain maps to 5-207 (IVGLTGGIAS…AALQTHRIEN (203 aa)). Residue 13 to 18 (ASGKSA) participates in ATP binding.

Belongs to the CoaE family.

The protein resides in the cytoplasm. The enzyme catalyses 3'-dephospho-CoA + ATP = ADP + CoA + H(+). Its pathway is cofactor biosynthesis; coenzyme A biosynthesis; CoA from (R)-pantothenate: step 5/5. Its function is as follows. Catalyzes the phosphorylation of the 3'-hydroxyl group of dephosphocoenzyme A to form coenzyme A. This is Dephospho-CoA kinase from Xanthomonas campestris pv. campestris (strain ATCC 33913 / DSM 3586 / NCPPB 528 / LMG 568 / P 25).